The following is a 513-amino-acid chain: Anthranilate synthase component 1 (513 aa).

L-tryptophan-binding positions include Ser50 and 279 to 281 (PYM). Residue 314–315 (GT) coordinates chorismate. Glu341 serves as a coordination point for Mg(2+). Residues Tyr429, Arg449, 463 to 465 (GAG), and Gly465 contribute to the chorismate site. Glu478 contacts Mg(2+).

It belongs to the anthranilate synthase component I family. In terms of assembly, heterotetramer consisting of two non-identical subunits: a beta subunit (TrpG) and a large alpha subunit (TrpE). Mg(2+) is required as a cofactor.

The catalysed reaction is chorismate + L-glutamine = anthranilate + pyruvate + L-glutamate + H(+). The protein operates within amino-acid biosynthesis; L-tryptophan biosynthesis; L-tryptophan from chorismate: step 1/5. Feedback inhibited by tryptophan. In terms of biological role, part of a heterotetrameric complex that catalyzes the two-step biosynthesis of anthranilate, an intermediate in the biosynthesis of L-tryptophan. In the first step, the glutamine-binding beta subunit (TrpG) of anthranilate synthase (AS) provides the glutamine amidotransferase activity which generates ammonia as a substrate that, along with chorismate, is used in the second step, catalyzed by the large alpha subunit of AS (TrpE) to produce anthranilate. In the absence of TrpG, TrpE can synthesize anthranilate directly from chorismate and high concentrations of ammonia. The chain is Anthranilate synthase component 1 (trpE) from Bacillus pumilus (Bacillus mesentericus).